Here is a 926-residue protein sequence, read N- to C-terminus: Storkhead-box protein 2 (926 aa).

7 disordered regions span residues 1–32 (MKKT…RSEK), 338–393 (EEEK…DIPG), 452–529 (EMPF…SYID), 564–586 (KEPS…PSYG), 633–693 (VKKL…SLDK), 723–802 (LLKS…VGTM), and 823–926 (TLLT…VTSV). A compositionally biased stretch (basic and acidic residues) spans 18–32 (FSDRASDRMRSRSEK). Residues 353 to 378 (HSGRSKKSRTHRKSHGKSRSHSKTRV) are compositionally biased toward basic residues. Over residues 379-393 (SKGDPSDGSHLDIPG) the composition is skewed to basic and acidic residues. Basic residues predominate over residues 463–472 (SHSKVHRSHS). Residues 473-495 (HTQDRRSRNERSNKAKERSRSMD) show a composition bias toward basic and acidic residues. Positions 518–529 (QDDQTPSQSYID) are enriched in polar residues. 2 stretches are compositionally biased toward basic and acidic residues: residues 633–658 (VKKL…EESP) and 684–693 (HSAEPSSLDK). The span at 746–769 (LGTSAAQAMPPSQRQQEPGGNQEA) shows a compositional bias: polar residues. Positions 785 to 799 (GANKNAEEEKNRDDV) are enriched in basic and acidic residues. Polar residues-rich tracts occupy residues 847–884 (MDSS…QNPA) and 914–926 (KPSN…VTSV).

In Mus musculus (Mouse), this protein is Storkhead-box protein 2 (Stox2).